Reading from the N-terminus, the 419-residue chain is GTPase Obg (419 aa).

Residues M1–V158 form the Obg domain. An OBG-type G domain is found at A159–S328. GTP contacts are provided by residues G165 to S172, F190 to S194, D211 to G214, N281 to D284, and S309 to A311. Residues S172 and T192 each coordinate Mg(2+). Residues E344–L419 form the OCT domain.

It belongs to the TRAFAC class OBG-HflX-like GTPase superfamily. OBG GTPase family. In terms of assembly, monomer. Requires Mg(2+) as cofactor.

It localises to the cytoplasm. Functionally, an essential GTPase which binds GTP, GDP and possibly (p)ppGpp with moderate affinity, with high nucleotide exchange rates and a fairly low GTP hydrolysis rate. Plays a role in control of the cell cycle, stress response, ribosome biogenesis and in those bacteria that undergo differentiation, in morphogenesis control. The polypeptide is GTPase Obg (Coprothermobacter proteolyticus (strain ATCC 35245 / DSM 5265 / OCM 4 / BT)).